The following is a 79-amino-acid chain: D-alanyl carrier protein (79 aa).

One can recognise a Carrier domain in the interval 1 to 76 (MKEQIFDIIE…KIAARVQEKT (76 aa)). At S34 the chain carries O-(pantetheine 4'-phosphoryl)serine.

The protein belongs to the DltC family. Post-translationally, 4'-phosphopantetheine is transferred from CoA to a specific serine of apo-DCP.

The protein localises to the cytoplasm. It participates in cell wall biogenesis; lipoteichoic acid biosynthesis. Its function is as follows. Carrier protein involved in the D-alanylation of lipoteichoic acid (LTA). The loading of thioester-linked D-alanine onto DltC is catalyzed by D-alanine--D-alanyl carrier protein ligase DltA. The DltC-carried D-alanyl group is further transferred to cell membrane phosphatidylglycerol (PG) by forming an ester bond, probably catalyzed by DltD. D-alanylation of LTA plays an important role in modulating the properties of the cell wall in Gram-positive bacteria, influencing the net charge of the cell wall. This chain is D-alanyl carrier protein, found in Lactococcus lactis subsp. cremoris (strain SK11).